The chain runs to 197 residues: Ion-translocating oxidoreductase complex subunit B (197 aa).

The segment at 1–26 is hydrophobic; sequence MSTILIAIIALAALAAVFGAILGFAS. The 59-residue stretch at 32–90 folds into the 4Fe-4S domain; that stretch reads EADPIVDQIDSILPQTQCGQCGYPGCRPYAEAIANGDQINKCPPGGQATIEKLADLMGV. Residues cysteine 49, cysteine 52, cysteine 57, cysteine 73, cysteine 114, cysteine 117, cysteine 120, cysteine 124, cysteine 144, cysteine 147, cysteine 150, and cysteine 154 each coordinate [4Fe-4S] cluster. 2 4Fe-4S ferredoxin-type domains span residues 105-134 and 135-164; these read TVAF…GGTK and ALHT…MIPV.

The protein belongs to the 4Fe4S bacterial-type ferredoxin family. RnfB subfamily. As to quaternary structure, the complex is composed of six subunits: RnfA, RnfB, RnfC, RnfD, RnfE and RnfG. [4Fe-4S] cluster is required as a cofactor.

Its subcellular location is the cell inner membrane. Functionally, part of a membrane-bound complex that couples electron transfer with translocation of ions across the membrane. This Vibrio campbellii (strain ATCC BAA-1116) protein is Ion-translocating oxidoreductase complex subunit B.